A 408-amino-acid chain; its full sequence is MSWDQVWIDVNIATMDPEISAPYGAITDAAIAVKEGKIAWMGPRSELPEFDVLSTPVYRGKGGWLTPGLIDAHTHLVFAGNRANEFELRLQGASYEEIARAGGGIISTVKACREASEAELFELGRQRLNALAKEGVTTVEIKSGYGLDTETELKLLRVARELGKHHHVDVKTTFLGAHAIPPEYKDNSDAYVDLVIDEMLTAVINENLADAVDVFCENIAFSLEQTERVLSTAKAAGLDIKLHAEQLSNLGGSAMAAKLGAKSVDHIEYLDEVGVKALSESGTCATLLPGAFYFLRETQMPPIDLLRQYEVPMVLASDYNPGSSPLCSSLLMLNMGCTLFRLTPEEALAGMTRNAAKALGVEDSVGVLKPGMQADFCLWDITTPAALAYSYGVDVCKEVVKNGKLVHQ.

Positions 73 and 75 each coordinate Fe(3+). Positions 73 and 75 each coordinate Zn(2+). The 4-imidazolone-5-propanoate site is built by Arg82, Tyr145, and His178. Position 145 (Tyr145) interacts with N-formimidoyl-L-glutamate. Fe(3+) is bound at residue His243. Position 243 (His243) interacts with Zn(2+). Gln246 provides a ligand contact to 4-imidazolone-5-propanoate. Asp318 provides a ligand contact to Fe(3+). Asp318 is a binding site for Zn(2+). N-formimidoyl-L-glutamate is bound by residues Asn320 and Gly322. Ser323 contributes to the 4-imidazolone-5-propanoate binding site.

Belongs to the metallo-dependent hydrolases superfamily. HutI family. Zn(2+) serves as cofactor. The cofactor is Fe(3+).

Its subcellular location is the cytoplasm. The catalysed reaction is 4-imidazolone-5-propanoate + H2O = N-formimidoyl-L-glutamate. The protein operates within amino-acid degradation; L-histidine degradation into L-glutamate; N-formimidoyl-L-glutamate from L-histidine: step 3/3. Catalyzes the hydrolytic cleavage of the carbon-nitrogen bond in imidazolone-5-propanoate to yield N-formimidoyl-L-glutamate. It is the third step in the universal histidine degradation pathway. The polypeptide is Imidazolonepropionase (Shewanella loihica (strain ATCC BAA-1088 / PV-4)).